Reading from the N-terminus, the 363-residue chain is 3-isopropylmalate dehydrogenase (363 aa).

Residue Gly78 to Glu91 coordinates NAD(+). Positions 99, 109, 138, and 227 each coordinate substrate. Residues Asp227, Asp251, and Asp255 each contribute to the Mg(2+) site. Gly285–Asn297 is an NAD(+) binding site.

The protein belongs to the isocitrate and isopropylmalate dehydrogenases family. LeuB type 1 subfamily. In terms of assembly, homodimer. Requires Mg(2+) as cofactor. Mn(2+) serves as cofactor.

It localises to the cytoplasm. The enzyme catalyses (2R,3S)-3-isopropylmalate + NAD(+) = 4-methyl-2-oxopentanoate + CO2 + NADH. It participates in amino-acid biosynthesis; L-leucine biosynthesis; L-leucine from 3-methyl-2-oxobutanoate: step 3/4. In terms of biological role, catalyzes the oxidation of 3-carboxy-2-hydroxy-4-methylpentanoate (3-isopropylmalate) to 3-carboxy-4-methyl-2-oxopentanoate. The product decarboxylates to 4-methyl-2 oxopentanoate. This is 3-isopropylmalate dehydrogenase from Buchnera aphidicola subsp. Uroleucon rudbeckiae.